A 101-amino-acid chain; its full sequence is Large ribosomal subunit protein uL23 (101 aa).

Belongs to the universal ribosomal protein uL23 family. Part of the 50S ribosomal subunit. Contacts protein L29, and trigger factor when it is bound to the ribosome.

Its function is as follows. One of the early assembly proteins it binds 23S rRNA. One of the proteins that surrounds the polypeptide exit tunnel on the outside of the ribosome. Forms the main docking site for trigger factor binding to the ribosome. This is Large ribosomal subunit protein uL23 from Aromatoleum aromaticum (strain DSM 19018 / LMG 30748 / EbN1) (Azoarcus sp. (strain EbN1)).